The sequence spans 184 residues: Elongation factor P 1 (184 aa).

This sequence belongs to the elongation factor P family.

Its subcellular location is the cytoplasm. It participates in protein biosynthesis; polypeptide chain elongation. Its function is as follows. Involved in peptide bond synthesis. Stimulates efficient translation and peptide-bond synthesis on native or reconstituted 70S ribosomes in vitro. Probably functions indirectly by altering the affinity of the ribosome for aminoacyl-tRNA, thus increasing their reactivity as acceptors for peptidyl transferase. The sequence is that of Elongation factor P 1 (efp1) from Protochlamydia amoebophila (strain UWE25).